A 578-amino-acid polypeptide reads, in one-letter code: Longifolene synthase (578 aa).

Mg(2+) is bound by residues D331, D335, and D475. The short motif at D331–D335 is the DDXXD motif element.

This sequence belongs to the terpene synthase family. Tpsd subfamily. Mg(2+) serves as cofactor. Requires Mn(2+) as cofactor.

It carries out the reaction (2E,6E)-farnesyl diphosphate = longifolene + diphosphate. It participates in sesquiterpene biosynthesis. It functions in the pathway terpene metabolism; oleoresin biosynthesis. Functionally, terpene synthase (TPS) involved in the biosynthesis of sesquiterpene natural products included in conifer oleoresin secretions and volatile emissions; these compounds contribute to biotic and abiotic stress defense against herbivores and pathogens. Catalyzes the conversion of (2E,6E)-farnesyl diphosphate (FPP) to longifolene. This Picea engelmannii x Picea glauca (Hybrid white spruce) protein is Longifolene synthase.